Here is a 95-residue protein sequence, read N- to C-terminus: Protein TusB (95 aa).

This sequence belongs to the DsrH/TusB family. In terms of assembly, heterohexamer, formed by a dimer of trimers. The hexameric TusBCD complex contains 2 copies each of TusB, TusC and TusD. The TusBCD complex interacts with TusE.

It is found in the cytoplasm. Its function is as follows. Part of a sulfur-relay system required for 2-thiolation of 5-methylaminomethyl-2-thiouridine (mnm(5)s(2)U) at tRNA wobble positions. This is Protein TusB from Photorhabdus laumondii subsp. laumondii (strain DSM 15139 / CIP 105565 / TT01) (Photorhabdus luminescens subsp. laumondii).